Here is a 555-residue protein sequence, read N- to C-terminus: ATP-dependent RNA helicase MRH4, mitochondrial (555 aa).

The transit peptide at 1–25 directs the protein to the mitochondrion; sequence MFKLLIPNKYNYVIRPLVRFKSIKS. A Q motif motif is present at residues 101 to 108; the sequence is DIKPTPVQ. The region spanning 144–361 is the Helicase ATP-binding domain; the sequence is ANEIQKTKVF…SKLFPDQRSL (218 aa). 157-164 serves as a coordination point for ATP; sequence AETGSGKT. The short motif at 309 to 312 is the DEAD box element; it reads DEAD. Residues 395–555 enclose the Helicase C-terminal domain; the sequence is CLAQALYAIS…NAIIRGLRIG (161 aa).

Belongs to the DEAD box helicase family. MRH4 subfamily.

The protein localises to the mitochondrion. It catalyses the reaction ATP + H2O = ADP + phosphate + H(+). ATP-binding RNA helicase involved in mitochondrial RNA metabolism. Required for maintenance of mitochondrial DNA. This is ATP-dependent RNA helicase MRH4, mitochondrial (MRH4) from Candida albicans (strain SC5314 / ATCC MYA-2876) (Yeast).